We begin with the raw amino-acid sequence, 406 residues long: Tryptophan synthase beta chain (406 aa).

At Lys95 the chain carries N6-(pyridoxal phosphate)lysine.

It belongs to the TrpB family. As to quaternary structure, tetramer of two alpha and two beta chains. The cofactor is pyridoxal 5'-phosphate.

It catalyses the reaction (1S,2R)-1-C-(indol-3-yl)glycerol 3-phosphate + L-serine = D-glyceraldehyde 3-phosphate + L-tryptophan + H2O. The protein operates within amino-acid biosynthesis; L-tryptophan biosynthesis; L-tryptophan from chorismate: step 5/5. Its function is as follows. The beta subunit is responsible for the synthesis of L-tryptophan from indole and L-serine. The polypeptide is Tryptophan synthase beta chain (Pseudomonas fluorescens (strain ATCC BAA-477 / NRRL B-23932 / Pf-5)).